Here is a 218-residue protein sequence, read N- to C-terminus: Replication protein RepB (218 aa).

Residues Met-1–Arg-26 form a disordered region. Positions Lys-16–Arg-26 are enriched in basic residues.

This sequence belongs to the Gram-positive plasmids replication protein type 2 family.

Functionally, is essential for plasmid replication. Nicks the positive strand at the plus origin of replication. In Lactiplantibacillus plantarum (Lactobacillus plantarum), this protein is Replication protein RepB (repB).